Here is a 270-residue protein sequence, read N- to C-terminus: MATYIMGDLHGCFTEFQQLLDKISYNPNYDELWLTGDIVARGEHSLACLRFIKDPKNNIKTVLGNHDLHLLATLVGIKKVKPTDKLEALFSAPDRLELQHWLRKQPLMVQHPTHNFLLVHAGISPEWDLSTTLSCAREAEMILQSDNYADYLAEMYDNTPDQWQDNLTGIARWRYILNAFTRMRFCYADKRLDFSCKLPIEKAPVTLKPWLELDNPLYDTHDILFGHWASLMGKTSRSNIYALDTGCVWGNHLTIINWETKQIFRQERLK.

It belongs to the Ap4A hydrolase family.

The enzyme catalyses P(1),P(4)-bis(5'-adenosyl) tetraphosphate + H2O = 2 ADP + 2 H(+). Hydrolyzes diadenosine 5',5'''-P1,P4-tetraphosphate to yield ADP. This chain is Bis(5'-nucleosyl)-tetraphosphatase, symmetrical, found in Haemophilus ducreyi (strain 35000HP / ATCC 700724).